The sequence spans 421 residues: Histidine--tRNA ligase (421 aa).

This sequence belongs to the class-II aminoacyl-tRNA synthetase family. Homodimer.

It is found in the cytoplasm. It carries out the reaction tRNA(His) + L-histidine + ATP = L-histidyl-tRNA(His) + AMP + diphosphate + H(+). This Thermus thermophilus (strain ATCC BAA-163 / DSM 7039 / HB27) protein is Histidine--tRNA ligase.